The chain runs to 61 residues: Small ribosomal subunit protein uS14 (61 aa).

Zn(2+)-binding residues include Cys24, Cys27, Cys40, and Cys43.

This sequence belongs to the universal ribosomal protein uS14 family. Zinc-binding uS14 subfamily. In terms of assembly, part of the 30S ribosomal subunit. Contacts proteins S3 and S10. Zn(2+) serves as cofactor.

Its function is as follows. Binds 16S rRNA, required for the assembly of 30S particles and may also be responsible for determining the conformation of the 16S rRNA at the A site. This is Small ribosomal subunit protein uS14 from Nitratidesulfovibrio vulgaris (strain DSM 19637 / Miyazaki F) (Desulfovibrio vulgaris).